The primary structure comprises 641 residues: Peroxisomal targeting signal 1 receptor (641 aa).

Residue C12 forms a Glycyl cysteine thioester (Cys-Gly) (interchain with G-Cter in ubiquitin) linkage. An amphipathic helix 1 (AH1) region spans residues 12–34; it reads CSEPNALGNFVQHFTNERSYHDK. An amphipathic helix 2 (AH2) region spans residues 74–92; sequence HLMMDRHLNLRDGPREHKE. The tract at residues 261-288 is amphipathic helix 4 (AH4); that stretch reads VEAAWDETARRTISDITRPITQINDPKL. Positions 331–335 match the WxxxF/Y motif motif; the sequence is WTEDY. TPR repeat units follow at residues 359 to 392, 393 to 426, 427 to 460, 503 to 536, 538 to 570, and 571 to 604; these read DSDTLERGMGLFNEGHLSDSIIALESEVKRNPEN, AMAWMYLGIAHAENDQDSQATTCLIKSLQIDPTN, SKARLALAVSHTNDYQKERALDTLEEWLQRTPEY, PEVQTALGLLYNMSYDYDKAVDCFKAALQNSPTD, QLWNKLGATLANSNRSQEALGAYFKALEHKPSY, and VRARSNLGISYLSLNMFQESATTFLGAIAIHPAP.

It belongs to the peroxisomal targeting signal receptor family. As to quaternary structure, interacts (via WxxxF/Y and LVxEF motifs) with PEX14; promoting translocation through the PEX13-PEX14 docking complex. Interacts with PEX7, promoting peroxisomal import of proteins containing a C-terminal PTS2-type peroxisomal targeting signal. Post-translationally, monoubiquitinated at Cys-12 by PEX2 during PEX5 passage through the retrotranslocation channel. Cys-12 monoubiquitination acts as a recognition signal for the PEX1-PEX6 complex and is required for PEX5 extraction and export from peroxisomes. When PEX5 recycling is compromised, polyubiquitinated by PEX10 during its passage through the retrotranslocation channel, leading to its degradation.

It is found in the cytoplasm. Its subcellular location is the cytosol. The protein resides in the peroxisome matrix. Receptor that mediates peroxisomal import of proteins containing a C-terminal PTS1-type tripeptide peroxisomal targeting signal (SKL-type). Binds to cargo proteins containing a PTS1 peroxisomal targeting signal in the cytosol, and translocates them into the peroxisome matrix by passing through the PEX13-PEX14 docking complex along with cargo proteins. PEX5 receptor is then retrotranslocated into the cytosol, leading to release of bound cargo in the peroxisome matrix, and reset for a subsequent peroxisome import cycle. Functionally, in addition to promoting peroxisomal translocation of proteins containing a PTS1 peroxisomal targeting signal, mediates peroxisomal import of proteins containing a C-terminal PTS2-type peroxisomal targeting signal via its interaction with PEX7. Interaction with PEX7 only takes place when PEX7 is associated with cargo proteins containing a PTS2 peroxisomal targeting signal. PEX7 along with PTS2-containing cargo proteins are then translocated through the PEX13-PEX14 docking complex together with PEX5. In Dictyostelium discoideum (Social amoeba), this protein is Peroxisomal targeting signal 1 receptor (pex5).